A 315-amino-acid chain; its full sequence is Porphobilinogen deaminase (315 aa).

C245 is subject to S-(dipyrrolylmethanemethyl)cysteine.

This sequence belongs to the HMBS family. Monomer. It depends on dipyrromethane as a cofactor.

The catalysed reaction is 4 porphobilinogen + H2O = hydroxymethylbilane + 4 NH4(+). It participates in porphyrin-containing compound metabolism; protoporphyrin-IX biosynthesis; coproporphyrinogen-III from 5-aminolevulinate: step 2/4. The protein operates within porphyrin-containing compound metabolism; chlorophyll biosynthesis. In terms of biological role, tetrapolymerization of the monopyrrole PBG into the hydroxymethylbilane pre-uroporphyrinogen in several discrete steps. In Prochlorococcus marinus (strain NATL1A), this protein is Porphobilinogen deaminase.